The primary structure comprises 588 residues: Proline--tRNA ligase (588 aa).

It belongs to the class-II aminoacyl-tRNA synthetase family. ProS type 1 subfamily. Homodimer.

Its subcellular location is the cytoplasm. It carries out the reaction tRNA(Pro) + L-proline + ATP = L-prolyl-tRNA(Pro) + AMP + diphosphate. Functionally, catalyzes the attachment of proline to tRNA(Pro) in a two-step reaction: proline is first activated by ATP to form Pro-AMP and then transferred to the acceptor end of tRNA(Pro). As ProRS can inadvertently accommodate and process non-cognate amino acids such as alanine and cysteine, to avoid such errors it has two additional distinct editing activities against alanine. One activity is designated as 'pretransfer' editing and involves the tRNA(Pro)-independent hydrolysis of activated Ala-AMP. The other activity is designated 'posttransfer' editing and involves deacylation of mischarged Ala-tRNA(Pro). The misacylated Cys-tRNA(Pro) is not edited by ProRS. In Corynebacterium efficiens (strain DSM 44549 / YS-314 / AJ 12310 / JCM 11189 / NBRC 100395), this protein is Proline--tRNA ligase.